Reading from the N-terminus, the 893-residue chain is Eukaryotic translation initiation factor 3 subunit A (893 aa).

The 184-residue stretch at 319–502 (LQRMAAHVLL…NSIFFGTDLT (184 aa)) folds into the PCI domain. Coiled-coil stretches lie at residues 576 to 707 (QKII…RAKR) and 784 to 881 (EIAL…REVA). Disordered regions lie at residues 592 to 634 (AREL…EIQA) and 837 to 893 (AEAR…RRRQ). A compositionally biased stretch (basic and acidic residues) spans 837-881 (AEARRLEREAEDEKRRQQYEKQRAKEEEAERKIQEDRDRLAREVA).

Belongs to the eIF-3 subunit A family. As to quaternary structure, component of the eukaryotic translation initiation factor 3 (eIF-3) complex. The eIF-3 complex interacts with pix.

The protein resides in the cytoplasm. In terms of biological role, RNA-binding component of the eukaryotic translation initiation factor 3 (eIF-3) complex, which is involved in protein synthesis of a specialized repertoire of mRNAs and, together with other initiation factors, stimulates binding of mRNA and methionyl-tRNAi to the 40S ribosome. The eIF-3 complex specifically targets and initiates translation of a subset of mRNAs involved in cell proliferation. This is Eukaryotic translation initiation factor 3 subunit A from Drosophila grimshawi (Hawaiian fruit fly).